Consider the following 202-residue polypeptide: Small ribosomal subunit protein uS4 (202 aa).

A disordered region spans residues 15–42 (LGDLPGLTRKAAKRSYPPGQHGQARRKR). One can recognise an S4 RNA-binding domain in the interval 90-152 (NRLDNVCFRI…KCSKLLAEAN (63 aa)).

It belongs to the universal ribosomal protein uS4 family. In terms of assembly, part of the 30S ribosomal subunit. Contacts protein S5. The interaction surface between S4 and S5 is involved in control of translational fidelity.

In terms of biological role, one of the primary rRNA binding proteins, it binds directly to 16S rRNA where it nucleates assembly of the body of the 30S subunit. Its function is as follows. With S5 and S12 plays an important role in translational accuracy. The sequence is that of Small ribosomal subunit protein uS4 from Synechococcus sp. (strain CC9311).